The sequence spans 370 residues: DNA replication and repair protein RecF (370 aa).

ATP is bound at residue 33-40; sequence GPNAAGKT.

Belongs to the RecF family.

The protein localises to the cytoplasm. Its function is as follows. The RecF protein is involved in DNA metabolism; it is required for DNA replication and normal SOS inducibility. RecF binds preferentially to single-stranded, linear DNA. It also seems to bind ATP. This is DNA replication and repair protein RecF from Moorella thermoacetica (strain ATCC 39073 / JCM 9320).